A 487-amino-acid chain; its full sequence is Glutamyl-tRNA(Gln) amidotransferase subunit A (487 aa).

Active-site charge relay system residues include Lys77 and Ser152. The active-site Acyl-ester intermediate is the Ser176.

The protein belongs to the amidase family. GatA subfamily. Heterotrimer of A, B and C subunits.

The catalysed reaction is L-glutamyl-tRNA(Gln) + L-glutamine + ATP + H2O = L-glutaminyl-tRNA(Gln) + L-glutamate + ADP + phosphate + H(+). In terms of biological role, allows the formation of correctly charged Gln-tRNA(Gln) through the transamidation of misacylated Glu-tRNA(Gln) in organisms which lack glutaminyl-tRNA synthetase. The reaction takes place in the presence of glutamine and ATP through an activated gamma-phospho-Glu-tRNA(Gln). This Ligilactobacillus salivarius (strain UCC118) (Lactobacillus salivarius) protein is Glutamyl-tRNA(Gln) amidotransferase subunit A.